A 485-amino-acid polypeptide reads, in one-letter code: N-succinylglutamate 5-semialdehyde dehydrogenase (485 aa).

220 to 225 serves as a coordination point for NAD(+); the sequence is GSANTG. Residues Glu-243 and Cys-278 contribute to the active site.

This sequence belongs to the aldehyde dehydrogenase family. AstD subfamily.

It catalyses the reaction N-succinyl-L-glutamate 5-semialdehyde + NAD(+) + H2O = N-succinyl-L-glutamate + NADH + 2 H(+). It participates in amino-acid degradation; L-arginine degradation via AST pathway; L-glutamate and succinate from L-arginine: step 4/5. Its function is as follows. Catalyzes the NAD-dependent reduction of succinylglutamate semialdehyde into succinylglutamate. The protein is N-succinylglutamate 5-semialdehyde dehydrogenase of Aliivibrio fischeri (strain ATCC 700601 / ES114) (Vibrio fischeri).